Consider the following 331-residue polypeptide: MRGYLVAIFLSAVFLYYVLHCILWGTNVYWVAPVEMKRRNKIQPCLSKPAFASLLRFHQFHPFLCAADFRKIASLYGSDKFDLPYGMRTSAEYFRLALSKLQSCDLFDEFDNIPCKKCVVVGNGGVLKNKTLGEKIDSYDVIIRMNNGPVLGHEEEVGRRTTFRLFYPESVFSDPIHNDPNTTMILTAFKPHDLRWLLELLMGDKINTNGFWKKPALNLIYKPYQIRILDPFIIRTAAYELLHFPKVFPKNQKPKHPTTGIIAITLAFYICHEVHLAGFKYNFSDLKSPLHYYGNATMSLMNKNAYHNVTAEQLFLKDIIEKNLVINLTQD.

The Cytoplasmic segment spans residues Met-1–Tyr-4. A helical; Signal-anchor for type II membrane protein transmembrane segment spans residues Leu-5 to Gly-25. The Lumenal segment spans residues Thr-26 to Asp-331. 6 N-linked (GlcNAc...) asparagine glycosylation sites follow: Asn-129, Asn-181, Asn-282, Asn-295, Asn-308, and Asn-327.

This sequence belongs to the glycosyltransferase 29 family.

Its subcellular location is the golgi apparatus membrane. It carries out the reaction a neolactoside nLc4Cer(d18:1(4E)) + CMP-N-acetyl-beta-neuraminate = a neolactoside IV(3)-alpha-NeuAc-nLc4Cer(d18:1(4E)) + CMP + H(+). The enzyme catalyses a beta-D-galactosyl-(1-&gt;4)-N-acetyl-beta-D-glucosaminyl derivative + CMP-N-acetyl-beta-neuraminate = an N-acetyl-alpha-neuraminyl-(2-&gt;3)-beta-D-galactosyl-(1-&gt;4)-N-acetyl-beta-D-glucosaminyl derivative + CMP + H(+). The catalysed reaction is a neolactoside nLc6Cer(d18:1(4E)) + CMP-N-acetyl-beta-neuraminate = a neolactoside VI(3)-alpha-NeuNAc-nLc6Cer(d18:1(4E)) + CMP + H(+). In terms of biological role, transfers the sialyl residue from CMP-N-acetyl-beta-neuraminate to the terminal galactose residue on sugar chains of glycoproteins and glycolipids. It's alpha-2,3-sialyltransferase activity is specific toward type II glycan chains (Galbeta1-4GlcNAc) on glycoproteins and glycolipids such as neolactosides nLc4Cer and nLc6Cer, whose sialyl-products serve as precursors for the Lewis X antigen. Critically involved in the synthesis of functional selectin ligands needed for neutrophil recruitment during inflammation and lymphocyte homing to the lymph nodes. This is Type 2 lactosamine alpha-2,3-sialyltransferase (ST3GAL6) from Pan troglodytes (Chimpanzee).